Reading from the N-terminus, the 246-residue chain is DNA repair protein RecO (246 aa).

This sequence belongs to the RecO family.

In terms of biological role, involved in DNA repair and RecF pathway recombination. This is DNA repair protein RecO from Methylobacterium nodulans (strain LMG 21967 / CNCM I-2342 / ORS 2060).